Here is a 476-residue protein sequence, read N- to C-terminus: MNILFAVSECVPFVKSGGLADVAGALPKELKKLGVDVRIILPNYSLIPQKLRDGCTLHKVINVPLGWRNQYCGILKGEQDGITYYLIDNEYYFKRDSLYGHYDDGERFSYFSKAVLECIPHLDFEVDVLHSHDWHTAMVNFLLREKYQDNPLYERIKTVYTIHNLQFQGVFPPEVIYDLLELGDEYFHSEQLEFYGNVNFMKGGIIASDQITAVSPTYKEEIQYEFFGEKLDGLLRKYNDKLSGIVNGIDTSVYNPETDSYIKAQYDAESLYEKSENKRALQRYFGLPEKEDTPIISMVTRLTKQKGLDLVRTVFREIMEEDVQCIILGSGDSEYEQFFEWMAYEYPEKVKVYIGFNEELAHQVYAGSDLFLMPSLFEPCGLGQLIALAYGTIPIVRETGGLNDTVHSYDEETGEGNGFSFTNFNAHDMLHTIHRAIEFYHDKPVWEQLVKQAMTEDYSWEQSALAYKELYKSLME.

Residue lysine 15 participates in ADP-alpha-D-glucose binding.

Belongs to the glycosyltransferase 1 family. Bacterial/plant glycogen synthase subfamily.

The catalysed reaction is [(1-&gt;4)-alpha-D-glucosyl](n) + ADP-alpha-D-glucose = [(1-&gt;4)-alpha-D-glucosyl](n+1) + ADP + H(+). It participates in glycan biosynthesis; glycogen biosynthesis. Its function is as follows. Synthesizes alpha-1,4-glucan chains using ADP-glucose. This chain is Glycogen synthase, found in Bacillus cereus (strain ATCC 14579 / DSM 31 / CCUG 7414 / JCM 2152 / NBRC 15305 / NCIMB 9373 / NCTC 2599 / NRRL B-3711).